The primary structure comprises 126 residues: Cystatin-like protein (126 aa).

The Secondary area of contact motif lies at 72-76 (QVVAG). Cysteines 94 and 115 form a disulfide.

It belongs to the cystatin family.

This chain is Cystatin-like protein (Cys), found in Drosophila melanogaster (Fruit fly).